Consider the following 499-residue polypeptide: Argininosuccinate lyase (499 aa).

The disordered stretch occupies residues 1–22 (MSDGEDHETANADDRDETVVRR). Over residues 7–22 (HETANADDRDETVVRR) the composition is skewed to basic and acidic residues.

It belongs to the lyase 1 family. Argininosuccinate lyase subfamily.

The protein localises to the cytoplasm. The catalysed reaction is 2-(N(omega)-L-arginino)succinate = fumarate + L-arginine. It functions in the pathway amino-acid biosynthesis; L-arginine biosynthesis; L-arginine from L-ornithine and carbamoyl phosphate: step 3/3. This is Argininosuccinate lyase from Haloarcula marismortui (strain ATCC 43049 / DSM 3752 / JCM 8966 / VKM B-1809) (Halobacterium marismortui).